The chain runs to 138 residues: Acidic phospholipase A2 Ts-A3 (138 aa).

The first 16 residues, 1–16 (MRTLWIMAVLLLGVEG), serve as a signal peptide directing secretion. 7 cysteine pairs are disulfide-bonded: Cys-42/Cys-132, Cys-44/Cys-60, Cys-59/Cys-111, Cys-65/Cys-138, Cys-66/Cys-104, Cys-73/Cys-97, and Cys-91/Cys-102. Residues Tyr-43, Gly-45, and Gly-47 each contribute to the Ca(2+) site. His-63 is an active-site residue. Asp-64 serves as a coordination point for Ca(2+). Residue Asp-105 is part of the active site.

The cofactor is Ca(2+). In terms of tissue distribution, expressed by the venom gland.

It localises to the secreted. It catalyses the reaction a 1,2-diacyl-sn-glycero-3-phosphocholine + H2O = a 1-acyl-sn-glycero-3-phosphocholine + a fatty acid + H(+). Snake venom phospholipase A2 (PLA2) that shows a moderate inhibition of ADP-induced human platelet aggregation when tested on platelet rich plasma. Exhibits high hydrolytic activities and prefers the anionic micelles (dPPC with deoxycholate) to the zwitterionic micelles (dPPC with Triton X-100). PLA2 catalyzes the calcium-dependent hydrolysis of the 2-acyl groups in 3-sn-phosphoglycerides. The protein is Acidic phospholipase A2 Ts-A3 of Trimeresurus stejnegeri (Chinese green tree viper).